The following is a 227-amino-acid chain: Charged multivesicular body protein 4c (227 aa).

Residues 1–27 (MSKITKLFKSSGGSGSSSKNRKGPSAQ) form a disordered region. Coiled-coil stretches lie at residues 32–94 (KLRE…STIE) and 129–187 (LEKI…MANV). Residues 178-227 (EDLNSQMANVNLPSVPSSKLPSTKLPSRPASSRKKVEDDDDMQMLAAWAT) are disordered. The segment covering 189–206 (LPSVPSSKLPSTKLPSRP) has biased composition (low complexity).

Belongs to the SNF7 family. Probable core component of the endosomal sorting required for transport complex III (ESCRT-III). ESCRT-III components are thought to multimerize to form a flat lattice on the perimeter membrane of the endosome.

It is found in the cytoplasm. The protein resides in the cytosol. The protein localises to the late endosome membrane. Probable core component of the endosomal sorting required for transport complex III (ESCRT-III) which is involved in multivesicular bodies (MVBs) formation and sorting of endosomal cargo proteins into MVBs. MVBs contain intraluminal vesicles (ILVs) that are generated by invagination and scission from the limiting membrane of the endosome and mostly are delivered to lysosomes enabling degradation of membrane proteins, such as stimulated growth factor receptors, lysosomal enzymes and lipids. Key component of the cytokinesis checkpoint, a process required to delay abscission to prevent both premature resolution of intercellular chromosome bridges and accumulation of DNA damage. The sequence is that of Charged multivesicular body protein 4c (chmp4c) from Xenopus laevis (African clawed frog).